We begin with the raw amino-acid sequence, 79 residues long: UPF0181 protein PC1_1931 (79 aa).

The disordered stretch occupies residues 54 to 79; the sequence is FDEDDDTVNDSDEEHYFDDGEEEDEQ.

This sequence belongs to the UPF0181 family.

The protein is UPF0181 protein PC1_1931 of Pectobacterium carotovorum subsp. carotovorum (strain PC1).